Reading from the N-terminus, the 268-residue chain is Small ribosomal subunit protein uS2 (268 aa).

This sequence belongs to the universal ribosomal protein uS2 family.

The sequence is that of Small ribosomal subunit protein uS2 from Coprothermobacter proteolyticus (strain ATCC 35245 / DSM 5265 / OCM 4 / BT).